We begin with the raw amino-acid sequence, 406 residues long: Secretion apparatus protein BsaZ (406 aa).

The next 4 membrane-spanning stretches (helical) occupy residues 28–48, 80–100, 137–157, and 175–195; these read IVAL…VDLT, IAAP…LVQS, ALLY…LYHA, and IVLT…VLIL. Residues 341-406 are disordered; it reads AANRGGPPPE…APARTGDQNA (66 aa). Over residues 370-399 the composition is skewed to low complexity; the sequence is DACADNAFPDDAPPGAAAPNAGSPDGGAPA.

It belongs to the type III secretion exporter family.

It localises to the cell membrane. Functionally, part of the bsa type III secretion system, is involved in the intracellular replication of invading bacteria inside the host cell. Probably necessary for the lysis of the vacuole membrane and escape into the host cell cytoplasm. The chain is Secretion apparatus protein BsaZ (bsaZ) from Burkholderia pseudomallei (strain 668).